The chain runs to 553 residues: Glycerol kinase 3 (553 aa).

Thr20 serves as a coordination point for substrate. Arg24 is a binding site for ATP. Residues Arg94, Tyr148, and Asp259 each contribute to the substrate site. ATP-binding positions include Thr281, Gly326, and 427 to 431 (GMTSN).

This sequence belongs to the FGGY kinase family.

It is found in the mitochondrion outer membrane. The protein localises to the cytoplasm. It catalyses the reaction glycerol + ATP = sn-glycerol 3-phosphate + ADP + H(+). Its pathway is polyol metabolism; glycerol degradation via glycerol kinase pathway; sn-glycerol 3-phosphate from glycerol: step 1/1. May be involved in the regulation of glycerol uptake and metabolism. This is Glycerol kinase 3 from Homo sapiens (Human).